A 349-amino-acid polypeptide reads, in one-letter code: N-acetyl-gamma-glutamyl-phosphate reductase (349 aa).

C152 is an active-site residue.

Belongs to the NAGSA dehydrogenase family. Type 1 subfamily.

Its subcellular location is the cytoplasm. The catalysed reaction is N-acetyl-L-glutamate 5-semialdehyde + phosphate + NADP(+) = N-acetyl-L-glutamyl 5-phosphate + NADPH + H(+). The protein operates within amino-acid biosynthesis; L-arginine biosynthesis; N(2)-acetyl-L-ornithine from L-glutamate: step 3/4. Functionally, catalyzes the NADPH-dependent reduction of N-acetyl-5-glutamyl phosphate to yield N-acetyl-L-glutamate 5-semialdehyde. The sequence is that of N-acetyl-gamma-glutamyl-phosphate reductase from Clavibacter sepedonicus (Clavibacter michiganensis subsp. sepedonicus).